A 226-amino-acid chain; its full sequence is B-cell antigen receptor complex-associated protein alpha chain (226 aa).

The first 32 residues, 1–32 (MPGGPGVLQALPATIFLLFLLSAVYLGPGCQA), serve as a signal peptide directing secretion. In terms of domain architecture, Ig-like C2-type spans 33–116 (LWMHKVPASL…RVQEGNESYQ (84 aa)). At 33–143 (LWMHKVPASL…LDMGEGTKNR (111 aa)) the chain is on the extracellular side. A disulfide bridge links Cys-54 with Cys-106. Residues Asn-57, Asn-63, Asn-73, Asn-88, Asn-97, and Asn-112 are each glycosylated (N-linked (GlcNAc...) asparagine). A helical membrane pass occupies residues 144-165 (IITAEGIILLFCAVVPGTLLLF). Over 166–226 (RKRWQNEKLG…NIGDVQLEKP (61 aa)) the chain is Cytoplasmic. The ITAM domain maps to 177 to 205 (DAGDEYEDENLYEGLNLDDCSMYEDISRG). 2 positions are modified to phosphotyrosine; by SRC-type Tyr-kinases: Tyr-188 and Tyr-199. Arg-204 carries the asymmetric dimethylarginine; by PRMT1 modification. At Tyr-210 the chain carries Phosphotyrosine; by Tyr-kinases.

In terms of assembly, heterodimer of alpha and beta chains; disulfide-linked. Part of the B-cell antigen receptor complex where the alpha/beta chain heterodimer is non-covalently associated with an antigen-specific membrane-bound surface immunoglobulin of two heavy chains and two light chains. Interacts through its phosphorylated ITAM domain with the SH2 domains of SYK which stimulates SYK autophosphorylation and activation. Also interacts, when phosphorylated on Tyr-210, with the SH2 domain of BLNK/SLP65, bringing BLNK into proximity with SYK and allowing SYK to phosphorylate BLNK which is necessary for trafficking of the BCR to late endosomes. Interacts with Src-family tyrosine kinases including FYN and LYN, increasing their activity. Phosphorylated on tyrosine, serine and threonine residues upon B-cell activation. Phosphorylation of tyrosine residues by Src-family kinases is an early and essential feature of the BCR signaling cascade. The phosphorylated tyrosines serve as docking sites for SH2-domain containing kinases, leading to their activation which in turn leads to phosphorylation of downstream targets. Phosphorylated by LYN. Phosphorylation of serine and threonine residues may prevent subsequent tyrosine phosphorylation. In terms of processing, arginine methylation in the ITAM domain may interfere with the binding of SYK. It promotes signals leading to B-cell differentiation. B-cells.

It localises to the cell membrane. In terms of biological role, required in cooperation with CD79B for initiation of the signal transduction cascade activated by binding of antigen to the B-cell antigen receptor complex (BCR) which leads to internalization of the complex, trafficking to late endosomes and antigen presentation. Also required for BCR surface expression and for efficient differentiation of pro- and pre-B-cells. Stimulates SYK autophosphorylation and activation. Binds to BLNK, bringing BLNK into proximity with SYK and allowing SYK to phosphorylate BLNK. Also interacts with and increases activity of some Src-family tyrosine kinases. Represses BCR signaling during development of immature B-cells. The sequence is that of B-cell antigen receptor complex-associated protein alpha chain (CD79A) from Homo sapiens (Human).